Reading from the N-terminus, the 447-residue chain is Argininosuccinate synthase (447 aa).

Residues 17 to 25 (AFSGGLDTS) and Ala43 contribute to the ATP site. Tyr99 is an L-citrulline binding site. Positions 129 and 131 each coordinate ATP. Residues Thr131, Asn135, and Asp136 each contribute to the L-aspartate site. Asn135 contacts L-citrulline. Asp136 serves as a coordination point for ATP. Residues Arg139 and Ser192 each coordinate L-citrulline. Position 194 (Asp194) interacts with ATP. Residues Thr201, Glu203, and Glu280 each coordinate L-citrulline.

Belongs to the argininosuccinate synthase family. Type 2 subfamily. Homotetramer.

It is found in the cytoplasm. The catalysed reaction is L-citrulline + L-aspartate + ATP = 2-(N(omega)-L-arginino)succinate + AMP + diphosphate + H(+). It functions in the pathway amino-acid biosynthesis; L-arginine biosynthesis; L-arginine from L-ornithine and carbamoyl phosphate: step 2/3. The chain is Argininosuccinate synthase from Salmonella heidelberg (strain SL476).